We begin with the raw amino-acid sequence, 353 residues long: Variable large protein 17 (353 aa).

Positions 1-18 (MRKRISAIIMTLFMVLVS) are cleaved as a signal peptide. Residue Cys19 is the site of N-palmitoyl cysteine attachment. Cys19 carries the S-diacylglycerol cysteine lipid modification. Residues 332–353 (EDKSVEATNTAEATTSGQQAKN) form a disordered region. Residues 337 to 353 (EATNTAEATTSGQQAKN) are compositionally biased toward polar residues.

It belongs to the variable large protein (Vlp) family. Delta subfamily.

It is found in the cell outer membrane. The Vlp and Vsp proteins are antigenically distinct proteins, only one vlp or vsp gene is transcriptionally active at any one time. Switching between these genes is a mechanism of host immune response evasion. The polypeptide is Variable large protein 17 (Borrelia hermsii).